The following is a 615-amino-acid chain: RNA polymerase sigma factor RpoD (615 aa).

Residues 177-215 are disordered; that stretch reads APTATHVGSELSQEDLDDDEDEDEEDGDDDAADDDNSID. Over residues 188–214 the composition is skewed to acidic residues; it reads SQEDLDDDEDEDEEDGDDDAADDDNSI. Residues 381–451 form a sigma-70 factor domain-2 region; sequence MVEANLRLVI…TRSIADQART (71 aa). Residues 405 to 408 carry the Interaction with polymerase core subunit RpoC motif; that stretch reads DLIQ. The interval 460–536 is sigma-70 factor domain-3; the sequence is ETINKLNRIS…DTTLELPLDS (77 aa). Residues 549-602 form a sigma-70 factor domain-4 region; the sequence is VLAGLTAREAKVLRMRFGIDMNTDHTLEEVGKQFDVTRERIRQIEAKALRKLRH. The H-T-H motif DNA-binding region spans 575 to 594; it reads LEEVGKQFDVTRERIRQIEA.

Belongs to the sigma-70 factor family. RpoD/SigA subfamily. As to quaternary structure, interacts transiently with the RNA polymerase catalytic core.

It localises to the cytoplasm. Its function is as follows. Sigma factors are initiation factors that promote the attachment of RNA polymerase to specific initiation sites and are then released. This sigma factor is the primary sigma factor during exponential growth. The protein is RNA polymerase sigma factor RpoD of Salmonella typhi.